A 330-amino-acid chain; its full sequence is Tryptophan--tRNA ligase (330 aa).

ATP-binding positions include 10 to 12 and 18 to 19; these read QAT and GN. A 'HIGH' region motif is present at residues 11–19; it reads ATGSLHLGN. Asp134 is a binding site for L-tryptophan. ATP contacts are provided by residues 146–148, Ile186, and 195–199; these read GED and KMSKS. The short motif at 195–199 is the 'KMSKS' region element; that stretch reads KMSKS.

This sequence belongs to the class-I aminoacyl-tRNA synthetase family. As to quaternary structure, homodimer.

The protein localises to the cytoplasm. The catalysed reaction is tRNA(Trp) + L-tryptophan + ATP = L-tryptophyl-tRNA(Trp) + AMP + diphosphate + H(+). Its function is as follows. Catalyzes the attachment of tryptophan to tRNA(Trp). This is Tryptophan--tRNA ligase from Rickettsia felis (strain ATCC VR-1525 / URRWXCal2) (Rickettsia azadi).